The primary structure comprises 211 residues: Uridine kinase (211 aa).

13 to 20 (GASASGKS) serves as a coordination point for ATP.

It belongs to the uridine kinase family.

Its subcellular location is the cytoplasm. It carries out the reaction uridine + ATP = UMP + ADP + H(+). It catalyses the reaction cytidine + ATP = CMP + ADP + H(+). Its pathway is pyrimidine metabolism; CTP biosynthesis via salvage pathway; CTP from cytidine: step 1/3. It participates in pyrimidine metabolism; UMP biosynthesis via salvage pathway; UMP from uridine: step 1/1. This is Uridine kinase from Shewanella pealeana (strain ATCC 700345 / ANG-SQ1).